The chain runs to 336 residues: Holliday junction branch migration complex subunit RuvB (336 aa).

Positions 4–184 (ADRLISAGTT…FGIVQRLEFY (181 aa)) are large ATPase domain (RuvB-L). ATP is bound by residues isoleucine 23, arginine 24, glycine 65, lysine 68, threonine 69, threonine 70, 131–133 (EDY), arginine 174, tyrosine 184, and arginine 221. Threonine 69 lines the Mg(2+) pocket. Residues 185-255 (QVPDLQYIVS…IAAQALDMLN (71 aa)) are small ATPAse domain (RuvB-S). The head domain (RuvB-H) stretch occupies residues 258–336 (AEGFDYMDRK…HFGITPPEMP (79 aa)). Arginine 294, arginine 313, and arginine 318 together coordinate DNA.

The protein belongs to the RuvB family. Homohexamer. Forms an RuvA(8)-RuvB(12)-Holliday junction (HJ) complex. HJ DNA is sandwiched between 2 RuvA tetramers; dsDNA enters through RuvA and exits via RuvB. An RuvB hexamer assembles on each DNA strand where it exits the tetramer. Each RuvB hexamer is contacted by two RuvA subunits (via domain III) on 2 adjacent RuvB subunits; this complex drives branch migration. In the full resolvosome a probable DNA-RuvA(4)-RuvB(12)-RuvC(2) complex forms which resolves the HJ.

It localises to the cytoplasm. It catalyses the reaction ATP + H2O = ADP + phosphate + H(+). In terms of biological role, the RuvA-RuvB-RuvC complex processes Holliday junction (HJ) DNA during genetic recombination and DNA repair, while the RuvA-RuvB complex plays an important role in the rescue of blocked DNA replication forks via replication fork reversal (RFR). RuvA specifically binds to HJ cruciform DNA, conferring on it an open structure. The RuvB hexamer acts as an ATP-dependent pump, pulling dsDNA into and through the RuvAB complex. RuvB forms 2 homohexamers on either side of HJ DNA bound by 1 or 2 RuvA tetramers; 4 subunits per hexamer contact DNA at a time. Coordinated motions by a converter formed by DNA-disengaged RuvB subunits stimulates ATP hydrolysis and nucleotide exchange. Immobilization of the converter enables RuvB to convert the ATP-contained energy into a lever motion, pulling 2 nucleotides of DNA out of the RuvA tetramer per ATP hydrolyzed, thus driving DNA branch migration. The RuvB motors rotate together with the DNA substrate, which together with the progressing nucleotide cycle form the mechanistic basis for DNA recombination by continuous HJ branch migration. Branch migration allows RuvC to scan DNA until it finds its consensus sequence, where it cleaves and resolves cruciform DNA. The chain is Holliday junction branch migration complex subunit RuvB from Shigella flexneri serotype 5b (strain 8401).